We begin with the raw amino-acid sequence, 240 residues long: uncharacterized protein (240 aa).

2 helical membrane-spanning segments follow: residues 16–36 (AVFF…YFIP) and 67–87 (FITA…VIAM).

It localises to the cell membrane. This is an uncharacterized protein from Bacillus subtilis (strain 168).